A 479-amino-acid chain; its full sequence is Adenosylhomocysteinase (479 aa).

Substrate contacts are provided by T65, D145, and E205. 206–208 (TTT) is a binding site for NAD(+). K235 and D239 together coordinate substrate. NAD(+) contacts are provided by residues N240, 269–274 (GYGDVG), E292, N327, 348–350 (IGH), and N393.

The protein belongs to the adenosylhomocysteinase family. NAD(+) serves as cofactor.

The protein localises to the cytoplasm. The enzyme catalyses S-adenosyl-L-homocysteine + H2O = L-homocysteine + adenosine. Its pathway is amino-acid biosynthesis; L-homocysteine biosynthesis; L-homocysteine from S-adenosyl-L-homocysteine: step 1/1. Its function is as follows. May play a key role in the regulation of the intracellular concentration of adenosylhomocysteine. This is Adenosylhomocysteinase from Herminiimonas arsenicoxydans.